The primary structure comprises 259 residues: 3-deoxy-manno-octulosonate cytidylyltransferase (259 aa).

The protein belongs to the KdsB family.

The protein localises to the cytoplasm. The catalysed reaction is 3-deoxy-alpha-D-manno-oct-2-ulosonate + CTP = CMP-3-deoxy-beta-D-manno-octulosonate + diphosphate. It functions in the pathway nucleotide-sugar biosynthesis; CMP-3-deoxy-D-manno-octulosonate biosynthesis; CMP-3-deoxy-D-manno-octulosonate from 3-deoxy-D-manno-octulosonate and CTP: step 1/1. Its pathway is bacterial outer membrane biogenesis; lipopolysaccharide biosynthesis. Its function is as follows. Activates KDO (a required 8-carbon sugar) for incorporation into bacterial lipopolysaccharide in Gram-negative bacteria. This chain is 3-deoxy-manno-octulosonate cytidylyltransferase, found in Actinobacillus succinogenes (strain ATCC 55618 / DSM 22257 / CCUG 43843 / 130Z).